A 627-amino-acid polypeptide reads, in one-letter code: Altered inheritance of mitochondria protein 9, mitochondrial (627 aa).

The transit peptide at 1-43 directs the protein to the mitochondrion; that stretch reads MIRYTVAGHSRRCVVGASKRVGAIKCITVAATKRFISNKPNEV.

It belongs to the AIM9 family.

The protein resides in the mitochondrion. This is Altered inheritance of mitochondria protein 9, mitochondrial (AIM9) from Saccharomyces cerevisiae (strain ATCC 204508 / S288c) (Baker's yeast).